The primary structure comprises 385 residues: Flavin-dependent monooxygenase (385 aa).

FAD contacts are provided by residues 12-15, 34-36, 44-47, Arg-105, Tyr-267, Asp-289, and 296-302; these read ASIA, EKN, YAID, and PLSGQGT.

This sequence belongs to the aromatic-ring hydroxylase family. FAD is required as a cofactor.

The catalysed reaction is 7-chlorotetracycline + NADPH + O2 + H(+) = (1S,10S,10aS)-3-(CONH2)-9-Cl-1-(Me2N)-3,3a,4,10-(HO)4-10-Me-2,5-dioxo-1H,10aH,11H,11aH-cyclopenta[b]anthracen-6-olate + CO + NADP(+) + H2O. It catalyses the reaction a tetracycline + NADPH + O2 + H(+) = a (1S,10aS)-3-(CONH2)-1-(Me2N)-3,3a,4,6-(HO)4-2,5-dioxo-1H,10aH,11H,11aH-cyclopenta[b]anthracene + CO + NADP(+) + H2O. Its activity is regulated as follows. Inhibited by anhydrotetracycline. In terms of biological role, an FAD-requiring monooxygenase active on tetracycline antibiotic and some of its derivatives, which leads to their inactivation. Expression in E.coli confers high resistance to oxytetracycline, slightly less resistance to tetracycline, moderate resistance to minocycline but no resistance to tigecycline. Degrades tetracycline and oxytetracycline; the reaction requires NADPH. Degrades and confers resistance to chlortetracycline. The chain is Flavin-dependent monooxygenase from Unknown prokaryotic organism.